The sequence spans 131 residues: Small ribosomal subunit protein bS6 (131 aa).

Residues 98 to 131 (EASPMVKAKDERRERRDDFANETADDAEAGDSEE) are disordered. The span at 104–116 (KAKDERRERRDDF) shows a compositional bias: basic and acidic residues. Residues 120-131 (TADDAEAGDSEE) show a composition bias toward acidic residues.

Belongs to the bacterial ribosomal protein bS6 family.

Its function is as follows. Binds together with bS18 to 16S ribosomal RNA. This is Small ribosomal subunit protein bS6 from Cronobacter sakazakii (strain ATCC BAA-894) (Enterobacter sakazakii).